A 156-amino-acid polypeptide reads, in one-letter code: ATP synthase subunit b (156 aa).

The chain crosses the membrane as a helical span at residues 11–31 (AIAFVLFVLFCMKYIWPPIMA).

It belongs to the ATPase B chain family. In terms of assembly, F-type ATPases have 2 components, F(1) - the catalytic core - and F(0) - the membrane proton channel. F(1) has five subunits: alpha(3), beta(3), gamma(1), delta(1), epsilon(1). F(0) has three main subunits: a(1), b(2) and c(10-14). The alpha and beta chains form an alternating ring which encloses part of the gamma chain. F(1) is attached to F(0) by a central stalk formed by the gamma and epsilon chains, while a peripheral stalk is formed by the delta and b chains.

It is found in the cell inner membrane. Its function is as follows. F(1)F(0) ATP synthase produces ATP from ADP in the presence of a proton or sodium gradient. F-type ATPases consist of two structural domains, F(1) containing the extramembraneous catalytic core and F(0) containing the membrane proton channel, linked together by a central stalk and a peripheral stalk. During catalysis, ATP synthesis in the catalytic domain of F(1) is coupled via a rotary mechanism of the central stalk subunits to proton translocation. In terms of biological role, component of the F(0) channel, it forms part of the peripheral stalk, linking F(1) to F(0). The polypeptide is ATP synthase subunit b (Yersinia enterocolitica serotype O:8 / biotype 1B (strain NCTC 13174 / 8081)).